Consider the following 225-residue polypeptide: Red fluorescent protein drFP583 (225 aa).

Residues 66–68 (QYG) constitute a cross-link (2-iminomethyl-5-imidazolinone (Gln-Gly)). At tyrosine 67 the chain carries (Z)-2,3-didehydrotyrosine.

Belongs to the GFP family. Homotetramer. In terms of processing, contains a chromophore consisting of modified amino acid residues. The chromophore is formed by autocatalytic backbone condensation between Xaa-N and Gly-(N+2), oxidation of Tyr-(N+1) to didehydrotyrosine, and formation of a double bond to the alpha-amino nitrogen of residue Xaa-N. Maturation of the chromophore requires nothing other than molecular oxygen.

Thought to play a role in photoprotection of the coral's resident symbiont microalgae's photosystems from photoinhibition caused by high light levels found near the surface of coral reefs. In deeper water, the fluorescence may be to convert blue light into longer wavelengths more suitable for use in photosynthesis by the microalgal symbionts. The sequence is that of Red fluorescent protein drFP583 from Discosoma sp. (Sea anemone).